Here is a 345-residue protein sequence, read N- to C-terminus: 3-dehydroquinate synthase (345 aa).

Residues 86 to 90 (GALLD), 110 to 111 (TT), Lys123, and Lys132 contribute to the NAD(+) site. Zn(2+) contacts are provided by Glu165, His229, and His243.

Belongs to the sugar phosphate cyclases superfamily. Dehydroquinate synthase family. NAD(+) serves as cofactor. Co(2+) is required as a cofactor. It depends on Zn(2+) as a cofactor.

Its subcellular location is the cytoplasm. It catalyses the reaction 7-phospho-2-dehydro-3-deoxy-D-arabino-heptonate = 3-dehydroquinate + phosphate. It participates in metabolic intermediate biosynthesis; chorismate biosynthesis; chorismate from D-erythrose 4-phosphate and phosphoenolpyruvate: step 2/7. Functionally, catalyzes the conversion of 3-deoxy-D-arabino-heptulosonate 7-phosphate (DAHP) to dehydroquinate (DHQ). The chain is 3-dehydroquinate synthase from Pyrobaculum aerophilum (strain ATCC 51768 / DSM 7523 / JCM 9630 / CIP 104966 / NBRC 100827 / IM2).